A 353-amino-acid chain; its full sequence is Membrane lipoprotein TmpC (353 aa).

Residues 1-20 (MREKWVRAFAGVFCAMLLIG) form the signal peptide. Cys-21 carries N-palmitoyl cysteine lipidation. Cys-21 carries S-diacylglycerol cysteine lipidation. Asp-47 is a binding site for guanosine. Asp-47 is an inosine binding site. Adenosine-binding positions include 47–48 (DS) and Phe-56. Guanosine contacts are provided by Asn-57, Asp-128, Phe-206, Gly-232, Asp-258, and Lys-280. Inosine-binding residues include Asn-57 and Asp-128. Adenosine is bound by residues Asp-128, Phe-206, Gly-232, Asp-258, and Lys-280. The inosine site is built by Gly-232, Asp-258, and Lys-280.

This sequence belongs to the BMP lipoprotein family. In terms of assembly, monomer.

The protein localises to the cell membrane. Functionally, binds purine nucleosides and may play a role in purine nucleoside uptake. May be part of an ABC-type nucleoside uptake system. Has highest affinity for guanosine, followed by inosine and adenosine. Has very low affinity for cytidine and does not bind thymidine. This is Membrane lipoprotein TmpC (tmpC) from Treponema pallidum (strain Nichols).